A 342-amino-acid chain; its full sequence is Oxygen-dependent coproporphyrinogen-III oxidase (342 aa).

S107 is a binding site for substrate. H111 and H121 together coordinate a divalent metal cation. H121 serves as the catalytic Proton donor. 123 to 125 (NYR) is a substrate binding site. Positions 155 and 185 each coordinate a divalent metal cation. Residues 277–312 (YVEFNLVYDRGTIFGLQTNGRTESILMSLPPLVRWE) form an important for dimerization region.

The protein belongs to the aerobic coproporphyrinogen-III oxidase family. As to quaternary structure, homodimer. Requires a divalent metal cation as cofactor.

It localises to the cytoplasm. The catalysed reaction is coproporphyrinogen III + O2 + 2 H(+) = protoporphyrinogen IX + 2 CO2 + 2 H2O. It functions in the pathway porphyrin-containing compound metabolism; protoporphyrin-IX biosynthesis; protoporphyrinogen-IX from coproporphyrinogen-III (O2 route): step 1/1. Involved in the heme and chlorophyll biosynthesis. Catalyzes the aerobic oxidative decarboxylation of propionate groups of rings A and B of coproporphyrinogen-III to yield the vinyl groups in protoporphyrinogen-IX. The chain is Oxygen-dependent coproporphyrinogen-III oxidase from Synechococcus sp. (strain ATCC 27144 / PCC 6301 / SAUG 1402/1) (Anacystis nidulans).